Reading from the N-terminus, the 196-residue chain is Small ribosomal subunit protein uS4c (196 aa).

A disordered region spans residues 15–42; sequence LGALPGLTRKTPKSGSNQKKKFNSGKKE. One can recognise an S4 RNA-binding domain in the interval 89 to 150; that stretch reads MRLDNILFRL…NQRSKRLVQN (62 aa).

It belongs to the universal ribosomal protein uS4 family. Part of the 30S ribosomal subunit. Contacts protein S5. The interaction surface between S4 and S5 is involved in control of translational fidelity.

The protein localises to the plastid. It localises to the chloroplast. One of the primary rRNA binding proteins, it binds directly to 16S rRNA where it nucleates assembly of the body of the 30S subunit. Functionally, with S5 and S12 plays an important role in translational accuracy. The sequence is that of Small ribosomal subunit protein uS4c (rps4) from Cenchrus longisetus (Feathertop).